Here is a 312-residue protein sequence, read N- to C-terminus: Telomere-binding protein OPG077 (312 aa).

The protein belongs to the orthopoxvirus OPG077 family.

The protein localises to the virion. Functionally, DNA-binding protein which binds to the hairpin form of the viral telomeric sequence. Required for the production of mature virions (MV). This chain is Telomere-binding protein OPG077 (OPG077), found in Vaccinia virus (strain L-IVP) (VACV).